The primary structure comprises 229 residues: Flagellar L-ring protein (229 aa).

A signal peptide spans 1–25; it reads MKQVRLLPSAPVRAVCALAVAALAG. Cys-26 carries N-palmitoyl cysteine lipidation. Cys-26 carries S-diacylglycerol cysteine lipidation.

The protein belongs to the FlgH family. In terms of assembly, the basal body constitutes a major portion of the flagellar organelle and consists of four rings (L,P,S, and M) mounted on a central rod.

The protein localises to the cell outer membrane. The protein resides in the bacterial flagellum basal body. In terms of biological role, assembles around the rod to form the L-ring and probably protects the motor/basal body from shearing forces during rotation. This chain is Flagellar L-ring protein, found in Burkholderia ambifaria (strain MC40-6).